The sequence spans 172 residues: Protein GrpE (172 aa).

Belongs to the GrpE family. In terms of assembly, homodimer.

The protein localises to the cytoplasm. Its function is as follows. Participates actively in the response to hyperosmotic and heat shock by preventing the aggregation of stress-denatured proteins, in association with DnaK and GrpE. It is the nucleotide exchange factor for DnaK and may function as a thermosensor. Unfolded proteins bind initially to DnaJ; upon interaction with the DnaJ-bound protein, DnaK hydrolyzes its bound ATP, resulting in the formation of a stable complex. GrpE releases ADP from DnaK; ATP binding to DnaK triggers the release of the substrate protein, thus completing the reaction cycle. Several rounds of ATP-dependent interactions between DnaJ, DnaK and GrpE are required for fully efficient folding. The sequence is that of Protein GrpE from Thermotoga petrophila (strain ATCC BAA-488 / DSM 13995 / JCM 10881 / RKU-1).